The chain runs to 156 residues: Transcription elongation factor GreA (156 aa).

Residues 46–67 (AEYHAAREKQSFIEGRIKELEA) are a coiled coil.

It belongs to the GreA/GreB family.

Functionally, necessary for efficient RNA polymerase transcription elongation past template-encoded arresting sites. The arresting sites in DNA have the property of trapping a certain fraction of elongating RNA polymerases that pass through, resulting in locked ternary complexes. Cleavage of the nascent transcript by cleavage factors such as GreA or GreB allows the resumption of elongation from the new 3'terminus. GreA releases sequences of 2 to 3 nucleotides. This is Transcription elongation factor GreA from Cereibacter sphaeroides (strain ATCC 17029 / ATH 2.4.9) (Rhodobacter sphaeroides).